We begin with the raw amino-acid sequence, 83 residues long: Short neurotoxin OKI-01/OKI-19 (83 aa).

The first 21 residues, Met-1 to Thr-21, serve as a signal peptide directing secretion. 4 disulfide bridges follow: Cys-24/Cys-45, Cys-38/Cys-62, Cys-64/Cys-75, and Cys-76/Cys-81.

The protein belongs to the three-finger toxin family. Short-chain subfamily. Type I alpha-neurotoxin sub-subfamily. As to expression, expressed by the venom gland.

Its subcellular location is the secreted. Binds to muscle nicotinic acetylcholine receptor (nAChR) and inhibit acetylcholine from binding to the receptor, thereby impairing neuromuscular transmission. The chain is Short neurotoxin OKI-01/OKI-19 from Laticauda laticaudata (Blue-ringed sea krait).